Here is a 119-residue protein sequence, read N- to C-terminus: Chorion class CA protein ERA.3 (119 aa).

An N-terminal signal peptide occupies residues 1–21 (MSYFVVFAICIQACLFHNVYS). The tract at residues 22–55 (QCLGRVGPGGPPLGPYGGPLGGPGYGPVGYGGCG) is left arm. The tract at residues 56–103 (GYGGSGIGNVAVAGELPVVGSSAVMGQVPVIGAVEFAGPACAVGSVSI) is central domain. The segment at 104–119 (SGACGPTCGCGGLPYY) is right arm.

Belongs to the chorion protein family.

This protein is one of many from the eggshell of the silk moth. This chain is Chorion class CA protein ERA.3 (ERA.3), found in Bombyx mori (Silk moth).